A 146-amino-acid chain; its full sequence is Large ribosomal subunit protein mL41 (146 aa).

A mitochondrion-targeting transit peptide spans 1-16; it reads MKGSPISQFSKTSINA.

It belongs to the mitochondrion-specific ribosomal protein mL41 family. As to quaternary structure, component of the mitochondrial large ribosomal subunit (mt-LSU). Mature yeast 74S mitochondrial ribosomes consist of a small (37S) and a large (54S) subunit. The 37S small subunit contains a 15S ribosomal RNA (15S mt-rRNA) and 34 different proteins. The 54S large subunit contains a 21S rRNA (21S mt-rRNA) and 46 different proteins.

It is found in the mitochondrion. In terms of biological role, component of the mitochondrial ribosome (mitoribosome), a dedicated translation machinery responsible for the synthesis of mitochondrial genome-encoded proteins, including at least some of the essential transmembrane subunits of the mitochondrial respiratory chain. The mitoribosomes are attached to the mitochondrial inner membrane and translation products are cotranslationally integrated into the membrane. The protein is Large ribosomal subunit protein mL41 (MRPL27) of Saccharomyces cerevisiae (strain ATCC 204508 / S288c) (Baker's yeast).